Reading from the N-terminus, the 231-residue chain is Endonuclease NucS (231 aa).

Belongs to the NucS endonuclease family.

It localises to the cytoplasm. Cleaves both 3' and 5' ssDNA extremities of branched DNA structures. The chain is Endonuclease NucS from Kocuria rhizophila (strain ATCC 9341 / DSM 348 / NBRC 103217 / DC2201).